A 159-amino-acid chain; its full sequence is Disulfide bond formation protein B (159 aa).

The Cytoplasmic segment spans residues 1-8; sequence MQANSRAF. Residues 9–25 traverse the membrane as a helical segment; that stretch reads FLLIAVIAFGLVGYALY. Residues 26–43 are Periplasmic-facing; it reads LQHVEGLQPCPLCVLQRF. Cys35 and Cys38 are disulfide-bonded. A helical membrane pass occupies residues 44–57; sequence AFVGIGVFSLLAAL. Over 58 to 63 the chain is Cytoplasmic; the sequence is SSATRL. The chain crosses the membrane as a helical span at residues 64–81; that stretch reads LWHGLGMLSGLGGIFVAG. Over 82-136 the chain is Periplasmic; it reads YHVSLLLNPKASCGIDPIENWVNALPTAKWLPQVFESDGLCTAPLPPVLGVSIPL. Cys94 and Cys122 are oxidised to a cystine. Residues 137-155 form a helical membrane-spanning segment; it reads WSLIWMVILALTLVVAMIR. The Cytoplasmic segment spans residues 156-159; that stretch reads RERR.

This sequence belongs to the DsbB family.

It is found in the cell inner membrane. Its function is as follows. Required for disulfide bond formation in some periplasmic proteins. Acts by oxidizing the DsbA protein. The polypeptide is Disulfide bond formation protein B (Ralstonia nicotianae (strain ATCC BAA-1114 / GMI1000) (Ralstonia solanacearum)).